Here is a 213-residue protein sequence, read N- to C-terminus: N-(5'-phosphoribosyl)anthranilate isomerase (213 aa).

It belongs to the TrpF family.

It catalyses the reaction N-(5-phospho-beta-D-ribosyl)anthranilate = 1-(2-carboxyphenylamino)-1-deoxy-D-ribulose 5-phosphate. It participates in amino-acid biosynthesis; L-tryptophan biosynthesis; L-tryptophan from chorismate: step 3/5. This Methanocella arvoryzae (strain DSM 22066 / NBRC 105507 / MRE50) protein is N-(5'-phosphoribosyl)anthranilate isomerase.